A 351-amino-acid chain; its full sequence is Foldase protein PrsA 1 (351 aa).

A signal peptide spans methionine 1–alanine 22. Cysteine 23 carries N-palmitoyl cysteine lipidation. The S-diacylglycerol cysteine moiety is linked to residue cysteine 23. One can recognise a PpiC domain in the interval threonine 145–lysine 240. Composition is skewed to low complexity over residues lysine 303–serine 317 and glutamate 326–glutamine 351. Residues lysine 303 to glutamine 351 form a disordered region.

The protein belongs to the PrsA family.

It is found in the cell membrane. It catalyses the reaction [protein]-peptidylproline (omega=180) = [protein]-peptidylproline (omega=0). In terms of biological role, plays a major role in protein secretion by helping the post-translocational extracellular folding of several secreted proteins. This is Foldase protein PrsA 1 (prsA1) from Streptococcus pyogenes serotype M18 (strain MGAS8232).